The sequence spans 88 residues: Putative membrane protein insertion efficiency factor (88 aa).

This sequence belongs to the UPF0161 family.

It is found in the cell inner membrane. Functionally, could be involved in insertion of integral membrane proteins into the membrane. In Burkholderia vietnamiensis (strain G4 / LMG 22486) (Burkholderia cepacia (strain R1808)), this protein is Putative membrane protein insertion efficiency factor.